The primary structure comprises 139 residues: Invertebrate-type lysozyme 3 (139 aa).

Positions 1-18 are cleaved as a signal peptide; it reads MFVKSLVFLTIAVAYASA. In terms of domain architecture, I-type lysozyme spans 19-138; it reads DCLHCICMRE…WNGIKSCCGC (120 aa). Cystine bridges form between Cys-20/Cys-106, Cys-23/Cys-138, Cys-25/Cys-31, Cys-36/Cys-45, Cys-58/Cys-86, Cys-76/Cys-82, and Cys-98/Cys-120. The active-site Proton donor is the Glu-28. The Nucleophile role is filled by Asp-39. 51 to 57 provides a ligand contact to substrate; it reads KLPYYED. Substrate is bound by residues Tyr-90 and 113–115; that span reads HNG.

It belongs to the glycosyl hydrolase 22 family. Type-I lysozyme subfamily. As to expression, expressed in pharynx grinder muscle pm7, isthmus marginal cell mc2 and pharyngeal muscle cell pm5, intestinal cells and at lower levels in coelomocytes and epidermis. Expressed at low levels in intestine.

The protein resides in the late endosome lumen. It is found in the recycling endosome lumen. It localises to the lysosome lumen. The protein localises to the secreted. The catalysed reaction is Hydrolysis of (1-&gt;4)-beta-linkages between N-acetylmuramic acid and N-acetyl-D-glucosamine residues in a peptidoglycan and between N-acetyl-D-glucosamine residues in chitodextrins.. Its function is as follows. Has bacteriolytic activity against Gram-positive bacteria. Plays a role in defense against bacterial pathogens. Involved in pharyngeal grinder function by enabling proper lysis of ingested bacteria. This is Invertebrate-type lysozyme 3 from Caenorhabditis elegans.